Reading from the N-terminus, the 349-residue chain is MDDNKSKALQAALSQIEKQFGKNTVMRLGDNTVQAVEAVSTGSLTLDIALGIGGLPKGRIVEIYGPESSGKTTMTLQAIAQCQKAGGTCAFIDAEHALDPQYARKLGVDIDNLLVSQPDHGEQALEIADMLVRSGAIDLIVVDSVAALTPKAEIEGEMGDSHMGLQARLMSQALRKITGNAKRSNCMVIFINQIRMKIGVMFGSPETTTGGNALKFYASVRLDIRRIGQVKEGDEIIGSETKVKVVKNKMAPPFREAIFQILYGKGVNQLGELVDLAVQQNIVQKAGAWYSYQGNKIGQGKNNVIRYLEENPQISTEIEAVIREQLLTKASDQTAAHDETEEEPDLLES.

65-72 (GPESSGKT) lines the ATP pocket. Positions 329–349 (KASDQTAAHDETEEEPDLLES) are disordered. Residues 339-349 (ETEEEPDLLES) are compositionally biased toward acidic residues.

This sequence belongs to the RecA family.

It localises to the cytoplasm. In terms of biological role, can catalyze the hydrolysis of ATP in the presence of single-stranded DNA, the ATP-dependent uptake of single-stranded DNA by duplex DNA, and the ATP-dependent hybridization of homologous single-stranded DNAs. It interacts with LexA causing its activation and leading to its autocatalytic cleavage. This is Protein RecA from Acinetobacter baylyi (strain ATCC 33305 / BD413 / ADP1).